The chain runs to 364 residues: Eukaryotic translation initiation factor 3 subunit H (364 aa).

An MPN domain is found at 13–162; it reads VQVDALVAIK…LRAYRLSPSF (150 aa).

The protein belongs to the eIF-3 subunit H family. As to quaternary structure, component of the eukaryotic translation initiation factor 3 (eIF-3) complex.

The protein localises to the cytoplasm. Component of the eukaryotic translation initiation factor 3 (eIF-3) complex, which is involved in protein synthesis of a specialized repertoire of mRNAs and, together with other initiation factors, stimulates binding of mRNA and methionyl-tRNAi to the 40S ribosome. The eIF-3 complex specifically targets and initiates translation of a subset of mRNAs involved in cell proliferation. In Phaeosphaeria nodorum (strain SN15 / ATCC MYA-4574 / FGSC 10173) (Glume blotch fungus), this protein is Eukaryotic translation initiation factor 3 subunit H.